Here is a 330-residue protein sequence, read N- to C-terminus: GMP reductase (330 aa).

The active-site Thioimidate intermediate is the cysteine 180. An NADP(+)-binding site is contributed by 209 to 232 (LIADGGIRHNGDIAKSVRFGASMV).

It belongs to the IMPDH/GMPR family. GuaC type 2 subfamily.

It catalyses the reaction IMP + NH4(+) + NADP(+) = GMP + NADPH + 2 H(+). Catalyzes the irreversible NADPH-dependent deamination of GMP to IMP. It functions in the conversion of nucleobase, nucleoside and nucleotide derivatives of G to A nucleotides, and in maintaining the intracellular balance of A and G nucleotides. In Lactobacillus delbrueckii subsp. bulgaricus (strain ATCC 11842 / DSM 20081 / BCRC 10696 / JCM 1002 / NBRC 13953 / NCIMB 11778 / NCTC 12712 / WDCM 00102 / Lb 14), this protein is GMP reductase.